Here is a 445-residue protein sequence, read N- to C-terminus: 3-phosphoshikimate 1-carboxyvinyltransferase (445 aa).

Residues K21, S22, and R26 each coordinate 3-phosphoshikimate. K21 provides a ligand contact to phosphoenolpyruvate. Phosphoenolpyruvate-binding residues include G92 and R120. 3-phosphoshikimate is bound by residues S165, Q166, D307, and K334. Q166 lines the phosphoenolpyruvate pocket. D307 functions as the Proton acceptor in the catalytic mechanism. Phosphoenolpyruvate-binding residues include R338, R379, and K405.

The protein belongs to the EPSP synthase family. As to quaternary structure, monomer.

The protein resides in the cytoplasm. It carries out the reaction 3-phosphoshikimate + phosphoenolpyruvate = 5-O-(1-carboxyvinyl)-3-phosphoshikimate + phosphate. It functions in the pathway metabolic intermediate biosynthesis; chorismate biosynthesis; chorismate from D-erythrose 4-phosphate and phosphoenolpyruvate: step 6/7. In terms of biological role, catalyzes the transfer of the enolpyruvyl moiety of phosphoenolpyruvate (PEP) to the 5-hydroxyl of shikimate-3-phosphate (S3P) to produce enolpyruvyl shikimate-3-phosphate and inorganic phosphate. The chain is 3-phosphoshikimate 1-carboxyvinyltransferase from Chlamydia felis (strain Fe/C-56) (Chlamydophila felis).